The following is a 217-amino-acid chain: 3,4-dihydroxy-2-butanone 4-phosphate synthase (217 aa).

Residues 37–38 (RE), aspartate 42, 150–154 (RRGHT), and glutamate 174 each bind D-ribulose 5-phosphate. Residue glutamate 38 coordinates Mg(2+). Histidine 153 contacts Mg(2+).

It belongs to the DHBP synthase family. As to quaternary structure, homodimer. Requires Mg(2+) as cofactor. The cofactor is Mn(2+).

It catalyses the reaction D-ribulose 5-phosphate = (2S)-2-hydroxy-3-oxobutyl phosphate + formate + H(+). The protein operates within cofactor biosynthesis; riboflavin biosynthesis; 2-hydroxy-3-oxobutyl phosphate from D-ribulose 5-phosphate: step 1/1. In terms of biological role, catalyzes the conversion of D-ribulose 5-phosphate to formate and 3,4-dihydroxy-2-butanone 4-phosphate. In Aeromonas salmonicida (strain A449), this protein is 3,4-dihydroxy-2-butanone 4-phosphate synthase.